The chain runs to 107 residues: Essential MCU regulator, mitochondrial (107 aa).

The transit peptide at 1–47 (MASTAARRLAWVAVRPGALWSGPRGRRGGDVYTVPGSSGLSQVPSRS) directs the protein to the mitochondrion. Residues 48-65 (VIVTRSGAILPKPVKMSF) are Mitochondrial matrix-facing. A helical transmembrane segment spans residues 66–85 (GLLRVFSIVIPFLYVGTLIS). A GXXXX[G/A/S] motif is present at residues 81 to 85 (GTLIS). Topologically, residues 86–107 (KNFAALLEEHDIFVPEDDDDDD) are mitochondrial intermembrane.

The protein belongs to the SMDT1/EMRE family. In terms of assembly, component of the uniplex complex, composed of MCU, EMRE/SMDT1, MICU1 and MICU2 (or MICU3) in a 4:4:1:1 stoichiometry. The number of EMRE/SMDT1 molecules is hovewer variable, ranging from 1 to 4 copies per uniplex complex, leading to uniplex complexes with distinct gatekeeping profiles. Interacts (via its C-terminal poly-Asp tail) with MCUR1; the interaction is direct. Unprocessed form interacts (via transit peptide) with MAIP1. Post-translationally, undergoes proteolytic degradation in neurons: degraded by AFG3L2 and SPG7 before SMDT1/EMRE assembly with the uniporter complex, limiting the availability of SMDT1/EMRE for MCU assembly and promoting efficient assembly of gatekeeper subunits with MCU. In terms of tissue distribution, widely expressed.

The protein localises to the mitochondrion inner membrane. Essential regulatory subunit of the mitochondrial calcium uniporter complex (uniplex), a complex that mediates calcium uptake into mitochondria. Required to bridge the calcium-sensing proteins MICU1 with the calcium-conducting subunit MCU. Acts by mediating activation of MCU and retention of MICU1 to the MCU pore, in order to ensure tight regulation of the uniplex complex and appropriate responses to intracellular calcium signaling. In Mus musculus (Mouse), this protein is Essential MCU regulator, mitochondrial.